Here is a 239-residue protein sequence, read N- to C-terminus: Phosphoglycolate phosphatase (239 aa).

Asp9 (nucleophile) is an active-site residue. Mg(2+)-binding residues include Asp9 and Asp11. Lys157 is a substrate binding site. Residues Asp180 and Asp184 each contribute to the Mg(2+) site.

The protein belongs to the archaeal SPP-like hydrolase family. Mg(2+) serves as cofactor.

The enzyme catalyses 2-phosphoglycolate + H2O = glycolate + phosphate. In terms of biological role, catalyzes the dephosphorylation of 2-phosphoglycolate. The protein is Phosphoglycolate phosphatase of Thermococcus kodakarensis (strain ATCC BAA-918 / JCM 12380 / KOD1) (Pyrococcus kodakaraensis (strain KOD1)).